We begin with the raw amino-acid sequence, 109 residues long: UPF0060 membrane protein RHA1_ro06609 (109 aa).

The next 4 helical transmembrane spans lie at 7 to 27 (VALF…VWQG), 33 to 53 (GWIW…VATL), 62 to 82 (ILAA…MVAD), and 88 to 108 (RWDV…MYAP).

This sequence belongs to the UPF0060 family.

The protein localises to the cell membrane. This Rhodococcus jostii (strain RHA1) protein is UPF0060 membrane protein RHA1_ro06609.